A 185-amino-acid chain; its full sequence is Elongation factor P 1 (185 aa).

This sequence belongs to the elongation factor P family.

It is found in the cytoplasm. Its pathway is protein biosynthesis; polypeptide chain elongation. In terms of biological role, involved in peptide bond synthesis. Stimulates efficient translation and peptide-bond synthesis on native or reconstituted 70S ribosomes in vitro. Probably functions indirectly by altering the affinity of the ribosome for aminoacyl-tRNA, thus increasing their reactivity as acceptors for peptidyl transferase. The sequence is that of Elongation factor P 1 (efp1) from Chlamydia trachomatis serovar D (strain ATCC VR-885 / DSM 19411 / UW-3/Cx).